The chain runs to 260 residues: LOB domain-containing protein 6 (260 aa).

Residues S32–L133 form the LOB domain.

The protein belongs to the LOB domain-containing protein family. As to quaternary structure, interacts with RS2. Expressed in leaves, leaf primordia, immature ears, immature tassels, whole ovules, silk and husk leaves. Found on the adaxial side of organs.

It localises to the nucleus. Functionally, promotes the switch from proliferation to differentiation in the embryo sac. Negative regulator of cell proliferation in the adaxial side of leaves. Regulates the formation of a symmetric lamina and the establishment of venation. Interacts directly with RS2 (rough sheath 2) to repress some knox homeobox genes. This chain is LOB domain-containing protein 6 (LBD6), found in Zea mays (Maize).